A 340-amino-acid chain; its full sequence is tRNA N6-adenosine threonylcarbamoyltransferase (340 aa).

Residues His115 and His119 each contribute to the Fe cation site. Residues 138–142 (VVSGG), Asp171, Gly184, Asp188, and Asn278 each bind substrate. Asp306 is a Fe cation binding site.

Belongs to the KAE1 / TsaD family. The cofactor is Fe(2+).

It is found in the cytoplasm. The enzyme catalyses L-threonylcarbamoyladenylate + adenosine(37) in tRNA = N(6)-L-threonylcarbamoyladenosine(37) in tRNA + AMP + H(+). Required for the formation of a threonylcarbamoyl group on adenosine at position 37 (t(6)A37) in tRNAs that read codons beginning with adenine. Is involved in the transfer of the threonylcarbamoyl moiety of threonylcarbamoyl-AMP (TC-AMP) to the N6 group of A37, together with TsaE and TsaB. TsaD likely plays a direct catalytic role in this reaction. This is tRNA N6-adenosine threonylcarbamoyltransferase from Clostridium botulinum (strain 657 / Type Ba4).